The primary structure comprises 1466 residues: Adhesion G protein-coupled receptor L1 (1466 aa).

The first 28 residues, 1–28, serve as a signal peptide directing secretion; it reads MARLAAALWSLCVTTVLVTSATQGLSRA. Over 29–852 the chain is Extracellular; it reads GLPFGLMRRE…EIYQGRINEL (824 aa). The SUEL-type lectin domain maps to 40 to 129; the sequence is ACEGYPIELR…KYLEVQYDCV (90 aa). 5 cysteine pairs are disulfide-bonded: Cys41–Cys71, Cys50–Cys128, Cys83–Cys115, Cys96–Cys102, and Cys135–Cys317. Glu42 contacts alpha-L-rhamnose. An N-linked (GlcNAc...) asparagine glycan is attached at Asn98. 117-120 provides a ligand contact to alpha-L-rhamnose; sequence GTYK. The Olfactomedin-like domain occupies 134–393; sequence VCPGTLQKVL…VVRYSLEFGP (260 aa). The interval 395–463 is disordered; the sequence is DPSAGPATSP…APAPSTRRPP (69 aa). The span at 400–436 shows a compositional bias: low complexity; that stretch reads PATSPPLSTTTTARPTPLTSTASPAATTPLRRAPLTT. The span at 448 to 463 shows a compositional bias: pro residues; that stretch reads DLPPATAPAPSTRRPP. Intrachain disulfides connect Cys475–Cys510 and Cys498–Cys527. N-linked (GlcNAc...) asparagine glycans are attached at residues Asn526, Asn635, Asn736, Asn795, Asn800, and Asn821. One can recognise a GAIN-B domain in the interval 664–845; sequence PARFLAAKQN…AVLMAHREIY (182 aa). Intrachain disulfides connect Cys796-Cys827 and Cys815-Cys829. The tract at residues 796–845 is GPS; it reads CSFWNYSERSMLGYWSTQGCRLVESNKTHTTCACSHLTNFAVLMAHREIY. A helical transmembrane segment spans residues 853–873; sequence LLSVITWVGIVISLVCLAICI. Over 874 to 887 the chain is Cytoplasmic; sequence STFCFLRGLQTDRN. A helical membrane pass occupies residues 888-908; it reads TIHKNLCINLFLAELLFLVGI. The Extracellular portion of the chain corresponds to 909 to 914; it reads DKTQYE. A helical membrane pass occupies residues 915 to 935; it reads VACPIFAGLLHYFFLAAFSWL. The Cytoplasmic portion of the chain corresponds to 936-958; it reads CLEGVHLYLLLVEVFESEYSRTK. Residues 959-979 traverse the membrane as a helical segment; the sequence is YYYLGGYCFPALVVGIAAAID. Residues 980-996 lie on the Extracellular side of the membrane; the sequence is YRSYGTEKACWLRVDNY. The chain crosses the membrane as a helical span at residues 997–1017; that stretch reads FIWSFIGPVSFVIVVNLVFLM. The Cytoplasmic portion of the chain corresponds to 1018–1044; it reads VTLHKMIRSSSVLKPDSSRLDNIKSWA. Residues 1045–1065 form a helical membrane-spanning segment; the sequence is LGAIALLFLLGLTWAFGLLFI. Topologically, residues 1066-1069 are extracellular; that stretch reads NKES. The helical transmembrane segment at 1070–1090 threads the bilayer; sequence VVMAYLFTTFNAFQGVFIFVF. Topologically, residues 1091–1466 are cytoplasmic; sequence HCALQKKVHK…DGQMQLVTSL (376 aa). The residue at position 1188 (Arg1188) is an Omega-N-methylarginine. Ser1214 bears the Phosphoserine mark. Disordered regions lie at residues 1242 to 1267, 1288 to 1319, 1352 to 1421, and 1443 to 1466; these read FNNS…RGRN, RGAS…GPGS, ESES…SRPP, and YLAA…VTSL. Positions 1296 to 1307 are enriched in pro residues; it reads GPPPEPPVPPVP. Ser1319 bears the Phosphoserine mark. The segment covering 1400-1412 has biased composition (pro residues); sequence ALPPPPPAPPGPP. Phosphoserine occurs at positions 1448 and 1465.

Belongs to the G-protein coupled receptor 2 family. Adhesion G-protein coupled receptor (ADGR) subfamily. In terms of assembly, forms a heterodimer, consisting of a large extracellular region (p120) non-covalently linked to a seven-transmembrane moiety (p85). Interacts with syntaxin and with proteins of the SHANK family via the PDZ domain. Interacts (via extracellular domain) with FLRT1, FLRT2 and FLRT3 (via extracellular domain). Post-translationally, autoproteolytically cleaved into 2 subunits, an extracellular subunit and a seven-transmembrane subunit. This proteolytic processing takes place early in the biosynthetic pathway, either in the endoplasmic reticulum or in the early compartment of the Golgi apparatus.

It localises to the cell membrane. The protein localises to the cell projection. The protein resides in the axon. It is found in the growth cone. Its subcellular location is the synapse. It localises to the presynaptic cell membrane. The protein localises to the synaptosome. Calcium-independent receptor of high affinity for alpha-latrotoxin, an excitatory neurotoxin present in black widow spider venom which triggers massive exocytosis from neurons and neuroendocrine cells. Receptor for TENM2 that mediates heterophilic synaptic cell-cell contact and postsynaptic specialization. Receptor probably implicated in the regulation of exocytosis. This chain is Adhesion G protein-coupled receptor L1, found in Mus musculus (Mouse).